Here is a 208-residue protein sequence, read N- to C-terminus: MARYLGPKLKLSRREGTDLFLKSGVRAIESKCRNRLDVAPGQHGARKPRLSDYGSQLREKQKVRRIYGILERQFRNYYTEANRLKGNTGENLLVLLEGRLDNVVYRMGFAATRAEARQLVSHKSIVVNGRVVNIPSYQVSVDDVVTVREKSKKQARIKASLELASQREKPTWLEVDAVKMEGVFKRTPERSDLSADINEHLIVELYSK.

The 61-residue stretch at 98-158 folds into the S4 RNA-binding domain; that stretch reads GRLDNVVYRM…EKSKKQARIK (61 aa).

This sequence belongs to the universal ribosomal protein uS4 family. In terms of assembly, part of the 30S ribosomal subunit. Contacts protein S5. The interaction surface between S4 and S5 is involved in control of translational fidelity.

One of the primary rRNA binding proteins, it binds directly to 16S rRNA where it nucleates assembly of the body of the 30S subunit. Functionally, with S5 and S12 plays an important role in translational accuracy. The protein is Small ribosomal subunit protein uS4 of Haemophilus ducreyi (strain 35000HP / ATCC 700724).